The primary structure comprises 488 residues: Glutamyl-tRNA(Gln) amidotransferase subunit A (488 aa).

Catalysis depends on charge relay system residues lysine 77 and serine 152. Serine 176 serves as the catalytic Acyl-ester intermediate.

Belongs to the amidase family. GatA subfamily. Heterotrimer of A, B and C subunits.

The enzyme catalyses L-glutamyl-tRNA(Gln) + L-glutamine + ATP + H2O = L-glutaminyl-tRNA(Gln) + L-glutamate + ADP + phosphate + H(+). Allows the formation of correctly charged Gln-tRNA(Gln) through the transamidation of misacylated Glu-tRNA(Gln) in organisms which lack glutaminyl-tRNA synthetase. The reaction takes place in the presence of glutamine and ATP through an activated gamma-phospho-Glu-tRNA(Gln). The chain is Glutamyl-tRNA(Gln) amidotransferase subunit A from Streptococcus pyogenes serotype M1.